A 66-amino-acid chain; its full sequence is Cold shock-like protein CspD (66 aa).

Positions 4-63 constitute a CSD domain; sequence GKVKWFNSEKGFGFIEVEGGDDVFVHFSAIQGDGFKTLEEGQEVSFEIVEGNRGPQAANV.

Homodimer.

Its subcellular location is the cytoplasm. This Bacillus anthracis protein is Cold shock-like protein CspD (cspD).